Reading from the N-terminus, the 115-residue chain is Macroconotoxin Mu8.1 (115 aa).

A signal peptide spans 1–21; sequence MDMKMTFSGLVLVVLVTTVVG. The propeptide occupies 22 to 26; sequence SSVRR. 5 cysteine pairs are disulfide-bonded: C36/C77, C44/C60, C48/C56, C83/C115, and C87/C97. E40 contributes to the Zn(2+) binding site. Residue H68 participates in Zn(2+) binding.

Mostly found as a homodimer in solution; non-covalently bound. In terms of tissue distribution, expressed by the venom duct.

It localises to the secreted. Modestly and reversibly inhibits Cav2.3/CACNA1E (IC(50)=5.8 uM) recombinantly expressed in HEK293 cells without affecting the voltage dependence of activation. In mouse DRG sensory neurons, modulates depolarization-induced calcium influx. This chain is Macroconotoxin Mu8.1, found in Conus mucronatus (Pointed cone).